A 248-amino-acid chain; its full sequence is Large ribosomal subunit protein uL29m (248 aa).

Disordered regions lie at residues 77-107 and 223-248; these read VSKY…GFFG and AYEP…PPSS.

It belongs to the universal ribosomal protein uL29 family. As to quaternary structure, component of the mitochondrial large ribosomal subunit. Mature mitochondrial ribosomes consist of a small (37S) and a large (54S) subunit. The 37S subunit contains at least 33 different proteins and 1 molecule of RNA (15S). The 54S subunit contains at least 45 different proteins and 1 molecule of RNA (21S).

It is found in the mitochondrion. This Ajellomyces capsulatus (strain NAm1 / WU24) (Darling's disease fungus) protein is Large ribosomal subunit protein uL29m (MRPL4).